Consider the following 512-residue polypeptide: MEQQFDYFTVTSLLVFLTFLLRLVWGWKKSSDKIKIRLPPGPSKLPIIGSLHHLIGLDVDLPYYALTDLANKYGPLMHLQLGKMSLVVASSAKMFKELMKENDLAISQRPVPYVARVLEDAGRDIAFVPYGDYWRQIRKISRMELFSVKKVQSLHYIREDQSSKLVESIRGHAGTVMNLSKAVSDYTSTVVARAAFGSGCKDQDKFIRLSLEMVAAAGAVSTLPDMFPALGFIPILSGKKAFLKSIQTEADKILDVIIDEHIQKTKSNEYDGKESDKEDIVDVLLRLEKSGELEIPITTQDIKAVIWSVFAGGTDTSSTTTLWTMSELMRNPKVMEKVQAEIREKLKGKKEIYESDIQDLHYMRAVIKEALRLRIPGPLLLPRETMEPIEVDGYVIPERTKILFNAWAVTRDPQLWENPESFIPERFIENPLDYKGTNYEFTPFGSGRRICPGMNFGIANVELPLAKLLYFFNWQLPPGMQPHELDMTAKFGVVCGRKNDLFLIPTPYNNIP.

A helical transmembrane segment spans residues Y7–W27. A heme-binding site is contributed by C451.

The protein belongs to the cytochrome P450 family. The cofactor is heme. Accumulates in mature fruits and in juice vesicles.

Its subcellular location is the membrane. The enzyme catalyses tirucalla-7,24-dien-3beta-ol + 2 reduced [NADPH--hemoprotein reductase] + 2 O2 = dihydroniloticin + 2 oxidized [NADPH--hemoprotein reductase] + 2 H2O + 2 H(+). Its pathway is secondary metabolite biosynthesis; terpenoid biosynthesis. Its function is as follows. Monooxygenase involved in the biosynthesis of limonoids triterpene natural products such as limonin, a compound with insecticidal activity responsible for the bitter taste in citrus. Catalyzes the conversion of tirucalladienol to dihydroniloticin. The protein is Dihydroniloticin synthase CYP71CD1 of Citrus sinensis (Sweet orange).